Reading from the N-terminus, the 325-residue chain is D-alanine--D-alanine ligase (325 aa).

The 201-residue stretch at 109 to 309 (KRVCKERMLP…FCTLLDQLIE (201 aa)) folds into the ATP-grasp domain. Residue 136-191 (CRRLPFPMFVKPANLGSSVGISKAHDEQELEAAFSLAKQYDRKIIVERGIEGRELE) participates in ATP binding. Mg(2+) contacts are provided by D262, E276, and N278.

Belongs to the D-alanine--D-alanine ligase family. The cofactor is Mg(2+). Mn(2+) is required as a cofactor.

Its subcellular location is the cytoplasm. The catalysed reaction is 2 D-alanine + ATP = D-alanyl-D-alanine + ADP + phosphate + H(+). Its pathway is cell wall biogenesis; peptidoglycan biosynthesis. Cell wall formation. In Solibacter usitatus (strain Ellin6076), this protein is D-alanine--D-alanine ligase.